The following is a 461-amino-acid chain: Argininosuccinate lyase (461 aa).

Belongs to the lyase 1 family. Argininosuccinate lyase subfamily.

It is found in the cytoplasm. It catalyses the reaction 2-(N(omega)-L-arginino)succinate = fumarate + L-arginine. The protein operates within amino-acid biosynthesis; L-arginine biosynthesis; L-arginine from L-ornithine and carbamoyl phosphate: step 3/3. The protein is Argininosuccinate lyase of Chlorobium luteolum (strain DSM 273 / BCRC 81028 / 2530) (Pelodictyon luteolum).